A 230-amino-acid chain; its full sequence is Maleylacetoacetate isomerase (230 aa).

The GST N-terminal domain occupies 7–95 (LRVTLYTYFR…YLDEAFPDNP (89 aa)). Glutathione contacts are provided by residues 17–22 (SSCSAR), Gln46, Val60, 79–80 (QS), Gln123, and 127–129 (NLR). Positions 104–226 (NPQQRALVRS…HWRTQQDTPT (123 aa)) constitute a GST C-terminal domain.

Belongs to the GST superfamily. Zeta family. It depends on glutathione as a cofactor.

The protein resides in the cytoplasm. The catalysed reaction is 4-maleylacetoacetate = 4-fumarylacetoacetate. It participates in amino-acid degradation; L-phenylalanine degradation; acetoacetate and fumarate from L-phenylalanine: step 5/6. The chain is Maleylacetoacetate isomerase (maiA) from Emericella nidulans (strain FGSC A4 / ATCC 38163 / CBS 112.46 / NRRL 194 / M139) (Aspergillus nidulans).